We begin with the raw amino-acid sequence, 438 residues long: MSAYAEHIKTVCSRFDKALEDNNFESVLVYSGQPRVDFLDDNAPPYRVNPLFKYWVPVTESPKSAIFYRKGSQRPTVYLFQARDFWHAPVNVPEEEWQQHVDLKIIDDLSMLTEDLGSDLEQSAFIGEDFAQPVSDWRVKARNPQALIDHLHFHRSIKTQWEVDNLREANRLAAKAHVAAKEAFFAGKSELEIHHAYLGAIDFRESQVPYNSIVALNSHSAILHYDVYDTVPPKQIRSFLIDAGARYRGYCSDITRSYAYEEGFYANLVEAMDKAQQELLSEIKPGVSYYDLHVSMHLKVAQILSDFEFIKGDAQSIYDKGYTSAFMPHGLGHFIGLQVHDVGGFLKDDKGNSYERSERHPFLRLLRDIEVGHVFTIEPGLYVVDQLLEEHKDSADINWEKVDELRPYGGVRIEDSIVVGADGNENLTRDAFKELGAE.

The Mn(2+) site is built by aspartate 242, aspartate 253, histidine 333, glutamate 378, and glutamate 414.

The protein belongs to the peptidase M24B family. Bacterial-type prolidase subfamily. Mn(2+) is required as a cofactor.

It catalyses the reaction Xaa-L-Pro dipeptide + H2O = an L-alpha-amino acid + L-proline. Functionally, splits dipeptides with a prolyl residue in the C-terminal position. The protein is Xaa-Pro dipeptidase 2 of Idiomarina loihiensis (strain ATCC BAA-735 / DSM 15497 / L2-TR).